The chain runs to 578 residues: MEVDEEKPQIIAENPNENVIRERNAEIVSGGNVFYNPVQEFNRDLSIAALNVYRQRLTKERSEKALKKQRKKVKEQEDEKTTPVPEDPPVYEAGTRYEDGLRILEALAATGLRSIRYAQEIAGVRQIVANDLSRQAVASINTNIRHNKVEELIEPSHSDAMTLMYLSTQPEKRFDAVDLDPYGCPNRFLDGAMQCLVDGGLLLVTATDMAVLAGNAPEACYVKYGSVPLRMKCCHEMALRILLHCIESHANRYGKYIEPLLSISADFYIRIFVRVYVGQAQCKLSMSKQSWIYQCTGCETFTLQPLGITKPNPTAGNPQQLKFGIPTGPAVNSQCEHCGHRHHLGGPIWSAPIHNPEFVQDLLTAVQETTLQSLGTQRRIVGVLSMVQEELQDVPLYYTPDKLCCVLKLEIVPMLKFRSAILHAGYRVSYSHASKNSLKTNAPPAVLWDILRSWSKRHPVNPERMIPGSPLAAILSKECTAVYEFDELHPEANPKSRKSALSRFQENPTPHWGPGTRATIMIGDNKLPKSYRNQNKKQRHKASEQQAEDDQQDTPQAVDEYDGDVEHLPKQPKLEATA.

Residues 18-451 enclose the Trm1 methyltransferase domain; that stretch reads NVIRERNAEI…APPAVLWDIL (434 aa). Arg43 is a binding site for S-adenosyl-L-methionine. Residues 63–92 form a disordered region; that stretch reads EKALKKQRKKVKEQEDEKTTPVPEDPPVYE. Positions 113 and 131 each coordinate S-adenosyl-L-methionine. Cys295, Cys298, Cys335, and Cys338 together coordinate Zn(2+). The interval 491-578 is disordered; sequence EANPKSRKSA…PKQPKLEATA (88 aa). The span at 564–578 shows a compositional bias: basic and acidic residues; that stretch reads DVEHLPKQPKLEATA.

The protein belongs to the class I-like SAM-binding methyltransferase superfamily. Trm1 family.

The catalysed reaction is guanosine(26) in tRNA + 2 S-adenosyl-L-methionine = N(2)-dimethylguanosine(26) in tRNA + 2 S-adenosyl-L-homocysteine + 2 H(+). In terms of biological role, dimethylates a single guanine residue at position 26 of most tRNAs using S-adenosyl-L-methionine as donor of the methyl groups. The protein is tRNA (guanine(26)-N(2))-dimethyltransferase of Drosophila melanogaster (Fruit fly).